Consider the following 632-residue polypeptide: Chaperone protein HtpG (632 aa).

The interval 1–339 (MTQQTMSFQA…SSDLPLNVSR (339 aa)) is a; substrate-binding. Residues 340 to 559 (EILQESRDVK…DNDMSGYLQR (220 aa)) form a b region. The c stretch occupies residues 560-632 (MLKAAGQSAP…TNALLLSRAA (73 aa)).

It belongs to the heat shock protein 90 family. In terms of assembly, homodimer.

Its subcellular location is the cytoplasm. Functionally, molecular chaperone. Has ATPase activity. The protein is Chaperone protein HtpG of Burkholderia pseudomallei (strain 1106a).